The chain runs to 167 residues: Epithelial membrane protein 2 (167 aa).

The helical transmembrane segment at 1–21 (MLVLLAFIIVFHITSAALLLV) threads the bilayer. Asn44, Asn47, and Asn52 each carry an N-linked (GlcNAc...) asparagine glycan. Transmembrane regions (helical) follow at residues 67-87 (TMILSTILCCIAFLIFLLQLF), 95-115 (FVLTSIIQLMACLCVMIAASI), and 143-163 (FILAWVAFAFTFISGLMYLIL).

The protein belongs to the PMP-22/EMP/MP20 family. Interacts with PTK2; regulates PTK2 activation and localization. Interacts with ITGB3; regulates the levels of the heterodimer ITGA5-ITGB3 integrin surface expression. Interacts with P2RX7 (via C-terminus). Interacts with ITGB1; the interaction may be direct or indirect and ITGB1 has a heterodimer form.

It is found in the golgi apparatus membrane. It localises to the cell membrane. Its subcellular location is the apical cell membrane. The protein resides in the membrane raft. The protein localises to the cytoplasm. It is found in the nucleus. It localises to the perinuclear region. Its function is as follows. Functions as a key regulator of cell membrane composition by regulating protein surface expression. Also, plays a role in regulation of processes including cell migration, cell proliferation, cell contraction and cell adhesion. Regulates transepithelial migration of neutrophils into the alveolar lumen, potentially via mediation of cell surface expression of adhesion markers and lipid raft formation. Negatively regulates caveolae formation by reducing CAV1 expression and CAV1 amount by increasing lysosomal degradation. Facilitates surface trafficking and the formation of lipid rafts bearing GPI-anchor proteins. Regulates surface expression of MHC1 and ICAM1 proteins increasing susceptibility to T-cell mediated cytotoxicity. Regulates the plasma membrane expression of the integrin heterodimers ITGA6-ITGB1, ITGA5-ITGB3 and ITGA5-ITGB1 resulting in modulation of cell-matrix adhesion. Also regulates many processes through PTK2. Regulates blood vessel endothelial cell migration and angiogenesis by regulating VEGF protein expression through PTK2 activation. Regulates cell migration and cell contraction through PTK2 and SRC activation. Regulates focal adhesion density, F-actin conformation and cell adhesion capacity through interaction with PTK2. Positively regulates cell proliferation. Plays a role during cell death and cell blebbing. Promotes angiogenesis and vasculogenesis through induction of VEGFA via a HIF1A-dependent pathway. Also plays a role in embryo implantation by regulating surface trafficking of integrin heterodimer ITGA5-ITGB3. Plays a role in placental angiogenesis and uterine natural killer cell regulation at the maternal-fetal placental interface, however not required in the maternal tissues for a viable pregnancy. Involved in the early stages of embryogenic development and cardiogenesis, potentially via regulation of epithelial-mesenchymal transition timing. May play a role in glomerular filtration. This chain is Epithelial membrane protein 2 (EMP2), found in Bos taurus (Bovine).